The chain runs to 127 residues: Apolipoprotein C-IV (127 aa).

The first 27 residues, 1–27, serve as a signal peptide directing secretion; that stretch reads MSLLRNRLQDLPALCLCVLVLACIGAC.

The protein belongs to the apolipoprotein C4 family.

The protein localises to the secreted. In terms of biological role, may participate in lipoprotein metabolism. The chain is Apolipoprotein C-IV (APOC4) from Chlorocebus sabaeus (Green monkey).